Here is a 253-residue protein sequence, read N- to C-terminus: tRNA pseudouridine synthase A (253 aa).

Catalysis depends on Asp-51, which acts as the Nucleophile. A substrate-binding site is contributed by Tyr-110.

Belongs to the tRNA pseudouridine synthase TruA family. In terms of assembly, homodimer.

It carries out the reaction uridine(38/39/40) in tRNA = pseudouridine(38/39/40) in tRNA. Functionally, formation of pseudouridine at positions 38, 39 and 40 in the anticodon stem and loop of transfer RNAs. The chain is tRNA pseudouridine synthase A from Wolinella succinogenes (strain ATCC 29543 / DSM 1740 / CCUG 13145 / JCM 31913 / LMG 7466 / NCTC 11488 / FDC 602W) (Vibrio succinogenes).